A 150-amino-acid chain; its full sequence is Ribosome maturation factor RimP (150 aa).

It belongs to the RimP family.

It is found in the cytoplasm. Required for maturation of 30S ribosomal subunits. This chain is Ribosome maturation factor RimP, found in Francisella tularensis subsp. holarctica (strain LVS).